Here is a 2197-residue protein sequence, read N- to C-terminus: Non-reducing polyketide synthase Preu6 (2197 aa).

The N-terminal acylcarrier protein transacylase domain (SAT) stretch occupies residues 14–253 (FFCPQSRAPP…HNPENAELAK (240 aa)). The Ketosynthase family 3 (KS3) domain occupies 375–797 (DDAIAITGAS…GSNAAVICVE (423 aa)). Catalysis depends on for beta-ketoacyl synthase activity residues Cys546, His681, and His720. The tract at residues 901–1198 (LVFSGQNTNA…SKPDSQVFQS (298 aa)) is malonyl-CoA:ACP transacylase (MAT) domain. The active-site For acyl/malonyl transferase activity is Ser988. The interval 1258-1282 (ATEASQASTTSDTIQSTPTQTVQSP) is disordered. Polar residues predominate over residues 1260 to 1281 (EASQASTTSDTIQSTPTQTVQS). An N-terminal hotdog fold region spans residues 1276–1403 (TQTVQSPPKL…GRVILTESSV (128 aa)). The PKS/mFAS DH domain occupies 1276-1576 (TQTVQSPPKL…FNKMEISKLA (301 aa)). Positions 1284-1575 (KLISRLASLQ…RFNKMEISKL (292 aa)) are product template (PT) domain. His1310 (proton acceptor; for dehydratase activity) is an active-site residue. The C-terminal hotdog fold stretch occupies residues 1424–1576 (AEKLMSSRAY…FNKMEISKLA (153 aa)). The active-site Proton donor; for dehydratase activity is the Asp1487. Over residues 1581-1591 (SVNASSPTGGR) the composition is skewed to polar residues. The disordered stretch occupies residues 1581–1614 (SVNASSPTGGRTQPPAAPKTQAQPMASRPSPTPL). 2 consecutive Carrier domains span residues 1639-1719 (NDIG…SQKM) and 1748-1824 (NSIT…ATPP). O-(pantetheine 4'-phosphoryl)serine occurs at positions 1673 and 1782. The interval 1817 to 1841 (LGASATPPSTTGSSTPGDISTAATT) is disordered. A compositionally biased stretch (low complexity) spans 1818–1833 (GASATPPSTTGSSTPG). A thioesterase (TE) domain region spans residues 1870–2197 (DSYQVKTVEY…PGLDFLIQNA (328 aa)). Active-site for thioesterase activity residues include Ser1990 and Asp2137.

Requires pantetheine 4'-phosphate as cofactor.

The catalysed reaction is 6 malonyl-CoA + 2 acetyl-CoA + 5 H(+) = o-orsellinate depside + 6 CO2 + 8 CoA + H2O. Its function is as follows. Non-reducing polyketide synthase; part of a gene cluster that mediates the biosynthesis of a yet unidentified natural product. The first step in the pathway is performed by Preu6 that condenses 2 acetyl-CoA starter units with 6 malonyl-CoA units to produce lecanoric acid (LA), also known as orsellinate depside, an intermediate that has significant antifungal activity against the plant pathogen Botryosphaeria berengeriana. The biosynthesis probably occurs via the formation of 2 orsellinate intermediates fused together by the C-terminal thioesterase (TE) domain that finally releases lecanoric acid. This is Non-reducing polyketide synthase Preu6 from Preussia isomera (Coprophilous fungus).